The chain runs to 341 residues: MASSDKQTSPKPPPSPSPLRNSKFCQSNMRILISGGAGFIGSHLVDKLMENEKNEVIVADNYFTGSKDNLKKWIGHPRFELIRHDVTEPLLIEVDQIYHLACPASPIFYKYNPVKTIKTNVIGTLNMLGLAKRVGARILLTSTSEVYGDPLIHPQPESYWGNVNPIGVRSCYDEGKRVAETLMFDYHRQHGIEIRIARIFNTYGPRMNIDDGRVVSNFIAQALRGEALTVQKPGTQTRSFCYVSDMVDGLMRLMEGDDTGPINIGNPGEFTMVELAETVKELINPSIEIKMVENTPDDPRQRKPDITKAKEVLGWEPKVKLREGLPLMEEDFRLRLGVHKN.

Positions 1-21 (MASSDKQTSPKPPPSPSPLRN) are disordered. Residue 60–85 (DNYFTGSKDNLKKWIGHPRFELIRHD) coordinates NAD(+). Residue Arg169 coordinates substrate. Tyr172 (proton acceptor) is an active-site residue. Position 172-176 (172-176 (YDEGK)) interacts with NAD(+). Asn201 lines the substrate pocket. Residue Arg213 coordinates NAD(+). Substrate contacts are provided by residues 214–218 (VVSNF), 231–238 (QKPGTQTR), and 298–302 (DPRQR).

This sequence belongs to the NAD(P)-dependent epimerase/dehydratase family. UDP-glucuronic acid decarboxylase subfamily. It depends on NAD(+) as a cofactor.

It localises to the cytoplasm. The enzyme catalyses UDP-alpha-D-glucuronate + H(+) = UDP-alpha-D-xylose + CO2. Its pathway is nucleotide-sugar biosynthesis; UDP-alpha-D-xylose biosynthesis; UDP-alpha-D-xylose from UDP-alpha-D-glucuronate: step 1/1. Its function is as follows. Catalyzes the NAD-dependent decarboxylation of UDP-glucuronic acid to UDP-xylose. Necessary for the biosynthesis of the core tetrasaccharide in glycosaminoglycan biosynthesis. The sequence is that of UDP-glucuronic acid decarboxylase 5 (UXS5) from Arabidopsis thaliana (Mouse-ear cress).